We begin with the raw amino-acid sequence, 598 residues long: Aspartate--tRNA(Asp/Asn) ligase (598 aa).

Glu172 is an L-aspartate binding site. Residues 196 to 199 form an aspartate region; that stretch reads QLFK. Arg218 is an L-aspartate binding site. Residues 218-220 and Gln227 contribute to the ATP site; that span reads RDE. His454 lines the L-aspartate pocket. Glu488 contacts ATP. Arg495 is a binding site for L-aspartate. 540–543 contacts ATP; it reads GLDR.

It belongs to the class-II aminoacyl-tRNA synthetase family. Type 1 subfamily. As to quaternary structure, homodimer.

It is found in the cytoplasm. It carries out the reaction tRNA(Asx) + L-aspartate + ATP = L-aspartyl-tRNA(Asx) + AMP + diphosphate. In terms of biological role, aspartyl-tRNA synthetase with relaxed tRNA specificity since it is able to aspartylate not only its cognate tRNA(Asp) but also tRNA(Asn). Reaction proceeds in two steps: L-aspartate is first activated by ATP to form Asp-AMP and then transferred to the acceptor end of tRNA(Asp/Asn). This chain is Aspartate--tRNA(Asp/Asn) ligase, found in Leptothrix cholodnii (strain ATCC 51168 / LMG 8142 / SP-6) (Leptothrix discophora (strain SP-6)).